Reading from the N-terminus, the 453-residue chain is Bifunctional protein GlmU (453 aa).

Residues 1-231 (MERTCLAVIL…EIEMTGCNNR (231 aa)) are pyrophosphorylase. UDP-N-acetyl-alpha-D-glucosamine-binding positions include 10–13 (LAAG), lysine 24, glutamine 77, 82–83 (GT), 105–107 (YGD), glycine 143, glutamate 157, asparagine 172, and asparagine 229. Aspartate 107 provides a ligand contact to Mg(2+). Residue asparagine 229 coordinates Mg(2+). The tract at residues 232–252 (AELAVIERFWQERRRREMMLA) is linker. The N-acetyltransferase stretch occupies residues 253–453 (GVTMIAPETV…AIKAAKKAEA (201 aa)). UDP-N-acetyl-alpha-D-glucosamine-binding residues include arginine 318 and lysine 336. The Proton acceptor role is filled by histidine 348. UDP-N-acetyl-alpha-D-glucosamine contacts are provided by tyrosine 351 and asparagine 362. Acetyl-CoA-binding positions include alanine 365, 371–372 (NY), serine 390, serine 408, and arginine 425.

This sequence in the N-terminal section; belongs to the N-acetylglucosamine-1-phosphate uridyltransferase family. The protein in the C-terminal section; belongs to the transferase hexapeptide repeat family. In terms of assembly, homotrimer. Requires Mg(2+) as cofactor.

It localises to the cytoplasm. It catalyses the reaction alpha-D-glucosamine 1-phosphate + acetyl-CoA = N-acetyl-alpha-D-glucosamine 1-phosphate + CoA + H(+). The enzyme catalyses N-acetyl-alpha-D-glucosamine 1-phosphate + UTP + H(+) = UDP-N-acetyl-alpha-D-glucosamine + diphosphate. It functions in the pathway nucleotide-sugar biosynthesis; UDP-N-acetyl-alpha-D-glucosamine biosynthesis; N-acetyl-alpha-D-glucosamine 1-phosphate from alpha-D-glucosamine 6-phosphate (route II): step 2/2. The protein operates within nucleotide-sugar biosynthesis; UDP-N-acetyl-alpha-D-glucosamine biosynthesis; UDP-N-acetyl-alpha-D-glucosamine from N-acetyl-alpha-D-glucosamine 1-phosphate: step 1/1. Its pathway is bacterial outer membrane biogenesis; LPS lipid A biosynthesis. Functionally, catalyzes the last two sequential reactions in the de novo biosynthetic pathway for UDP-N-acetylglucosamine (UDP-GlcNAc). The C-terminal domain catalyzes the transfer of acetyl group from acetyl coenzyme A to glucosamine-1-phosphate (GlcN-1-P) to produce N-acetylglucosamine-1-phosphate (GlcNAc-1-P), which is converted into UDP-GlcNAc by the transfer of uridine 5-monophosphate (from uridine 5-triphosphate), a reaction catalyzed by the N-terminal domain. The sequence is that of Bifunctional protein GlmU from Rhizobium etli (strain ATCC 51251 / DSM 11541 / JCM 21823 / NBRC 15573 / CFN 42).